The following is a 168-amino-acid chain: Protein yop-1 (168 aa).

At 1 to 35 the chain is on the cytoplasmic side; the sequence is MSSPQDRAQQYIGQLDKELSKYPTLNNLEKTTGVP. The helical transmembrane segment at 36–55 threads the bilayer; that stretch reads KAYAVIGLVALYFFLIIFNL. Position 56 (Gly-56) is a topological domain, lumenal. Residues 57-76 form a helical membrane-spanning segment; sequence GQLLTNLAGFVLPGYYSLNA. The Cytoplasmic segment spans residues 77–86; that stretch reads LFTASKQDDT. Residues 87-103 traverse the membrane as a helical segment; sequence QWLTYWVVFSLFTVIES. At 104–105 the chain is on the lumenal side; it reads LI. The helical transmembrane segment at 106 to 124 threads the bilayer; it reads SVVYWFPFYFTFKFVFLLW. Residues 125 to 168 are Cytoplasmic-facing; the sequence is LSLPTFKGAETIFRSFLAPTLGRYFQNGSTASGLRAKADAVHTD.

Belongs to the DP1 family. Oligomer.

It is found in the endoplasmic reticulum membrane. It localises to the golgi apparatus membrane. Required to generate and maintain the structure of the tubular endoplasmic reticulum network and the vacuole. Induces high curvature in membranes and causes membrane tubule formation. Involved in membrane/vesicle trafficking. This chain is Protein yop-1 (yop-1), found in Neurospora crassa (strain ATCC 24698 / 74-OR23-1A / CBS 708.71 / DSM 1257 / FGSC 987).